The sequence spans 162 residues: MDNLNINFINDDEHPIPSQDLLLKCLQLVADKHHISHAEVNLNIVSNDEIQQINKQFRNKDKPTNIISFEFEKPQGLPDDIANDFLGDIVIAPAVLENEAKEQNKEINDHWQHIFIHGLLHLLGYDHQDDQEAEVMENLEIQLLAQLGIANPYIEQENQNGR.

Zn(2+) contacts are provided by H117, H121, and H127.

This sequence belongs to the endoribonuclease YbeY family. Zn(2+) is required as a cofactor.

Its subcellular location is the cytoplasm. Functionally, single strand-specific metallo-endoribonuclease involved in late-stage 70S ribosome quality control and in maturation of the 3' terminus of the 16S rRNA. This Francisella tularensis subsp. holarctica (strain OSU18) protein is Endoribonuclease YbeY.